The following is a 650-amino-acid chain: Gamma-tubulin complex component 4 homolog (650 aa).

Ser-214 bears the Phosphoserine mark. Thr-216 is subject to Phosphothreonine. Ser-218 is subject to Phosphoserine.

Belongs to the TUBGCP family.

It localises to the cytoplasm. The protein resides in the cytoskeleton. The protein localises to the microtubule organizing center. It is found in the centrosome. Functionally, gamma-tubulin complex is necessary for microtubule nucleation at the centrosome. This is Gamma-tubulin complex component 4 homolog (Grip75) from Drosophila melanogaster (Fruit fly).